The chain runs to 108 residues: Thiosulfate sulfurtransferase GlpE (108 aa).

A Rhodanese domain is found at 17-105; it reads KDGSAALVDI…WARQYPQDVE (89 aa). Cysteine 65 serves as the catalytic Cysteine persulfide intermediate.

This sequence belongs to the GlpE family.

It is found in the cytoplasm. The catalysed reaction is thiosulfate + hydrogen cyanide = thiocyanate + sulfite + 2 H(+). It carries out the reaction thiosulfate + [thioredoxin]-dithiol = [thioredoxin]-disulfide + hydrogen sulfide + sulfite + 2 H(+). In terms of biological role, transferase that catalyzes the transfer of sulfur from thiosulfate to thiophilic acceptors such as cyanide or dithiols. May function in a CysM-independent thiosulfate assimilation pathway by catalyzing the conversion of thiosulfate to sulfite, which can then be used for L-cysteine biosynthesis. In Serratia proteamaculans (strain 568), this protein is Thiosulfate sulfurtransferase GlpE.